The primary structure comprises 27 residues: Nucleoside diphosphate kinase 2 (27 aa).

Lys3 serves as a coordination point for ATP.

Belongs to the NDK family. Requires Mg(2+) as cofactor.

The catalysed reaction is a 2'-deoxyribonucleoside 5'-diphosphate + ATP = a 2'-deoxyribonucleoside 5'-triphosphate + ADP. It carries out the reaction a ribonucleoside 5'-diphosphate + ATP = a ribonucleoside 5'-triphosphate + ADP. Major role in the synthesis of nucleoside triphosphates other than ATP. The ATP gamma phosphate is transferred to the NDP beta phosphate via a ping-pong mechanism, using a phosphorylated active-site intermediate. This is Nucleoside diphosphate kinase 2 from Pseudotsuga menziesii (Douglas-fir).